The primary structure comprises 335 residues: Glyceraldehyde-3-phosphate dehydrogenase (335 aa).

Residues 12–13 (RI), aspartate 34, arginine 78, and serine 120 each bind NAD(+). Residues 151–153 (SCT) and threonine 182 contribute to the D-glyceraldehyde 3-phosphate site. Residue cysteine 152 is the Nucleophile of the active site. Asparagine 183 is a binding site for NAD(+). D-glyceraldehyde 3-phosphate contacts are provided by residues arginine 197, 210 to 211 (TG), and arginine 233. Residue asparagine 315 coordinates NAD(+).

This sequence belongs to the glyceraldehyde-3-phosphate dehydrogenase family. Homotetramer.

Its subcellular location is the cytoplasm. It catalyses the reaction D-glyceraldehyde 3-phosphate + phosphate + NAD(+) = (2R)-3-phospho-glyceroyl phosphate + NADH + H(+). Its pathway is carbohydrate degradation; glycolysis; pyruvate from D-glyceraldehyde 3-phosphate: step 1/5. Its function is as follows. Catalyzes the oxidative phosphorylation of glyceraldehyde 3-phosphate (G3P) to 1,3-bisphosphoglycerate (BPG) using the cofactor NAD. The first reaction step involves the formation of a hemiacetal intermediate between G3P and a cysteine residue, and this hemiacetal intermediate is then oxidized to a thioester, with concomitant reduction of NAD to NADH. The reduced NADH is then exchanged with the second NAD, and the thioester is attacked by a nucleophilic inorganic phosphate to produce BPG. In Geobacillus stearothermophilus (Bacillus stearothermophilus), this protein is Glyceraldehyde-3-phosphate dehydrogenase (gap).